Here is a 759-residue protein sequence, read N- to C-terminus: Subtilisin-like protease SBT3.16 (759 aa).

A signal peptide spans 1-33 (MELSSLIVPNNKKHFVVVFIGLVLIFKIALITA). Positions 34–119 (ANEKSQIYTV…VTRSKNMKLK (86 aa)) are cleaved as a propeptide — activation peptide. The region spanning 41–118 (YTVHLGERQH…RVTRSKNMKL (78 aa)) is the Inhibitor I9 domain. Positions 124-608 (SDYLGLTSAA…GGLVNPVKVA (485 aa)) constitute a Peptidase S8 domain. The active-site Charge relay system is D153. N-linked (GlcNAc...) asparagine glycans are attached at residues N186 and N209. H229 acts as the Charge relay system in catalysis. Residue N371 is glycosylated (N-linked (GlcNAc...) asparagine). Residue S539 is the Charge relay system of the active site. N-linked (GlcNAc...) asparagine glycans are attached at residues N632 and N711.

The protein belongs to the peptidase S8 family.

The protein localises to the secreted. The protein is Subtilisin-like protease SBT3.16 of Arabidopsis thaliana (Mouse-ear cress).